We begin with the raw amino-acid sequence, 398 residues long: Cytochrome b (398 aa).

Residues 45-65 (LGSIAGIALVIQIITGVILAM) form a helical membrane-spanning segment. Heme b is bound by residues His-95 and His-109. 9 helical membrane passes run 96–116 (AVGA…GLYY), 129–149 (IGII…VLPW), 164–184 (FSAI…GFSV), 192–212 (FFSL…LHLV), 245–265 (FVGF…EPNY), 277–297 (PLVT…YAIL), 304–324 (LGGV…PWLD), 339–359 (MAFW…GQPA), and 366–386 (ISRF…PLIG). Heme b is bound by residues His-196 and His-210.

It belongs to the cytochrome b family. The main subunits of complex b-c1 are: cytochrome b, cytochrome c1 and the Rieske protein. Heme b serves as cofactor.

Its subcellular location is the cell membrane. Its function is as follows. Component of the ubiquinol-cytochrome c reductase complex (complex III or cytochrome b-c1 complex), which is a respiratory chain that generates an electrochemical potential coupled to ATP synthesis. This is Cytochrome b (petB) from Rickettsia conorii (strain ATCC VR-613 / Malish 7).